The sequence spans 122 residues: Large ribosomal subunit protein uL14 (122 aa).

This sequence belongs to the universal ribosomal protein uL14 family. Part of the 50S ribosomal subunit. Forms a cluster with proteins L3 and L19. In the 70S ribosome, L14 and L19 interact and together make contacts with the 16S rRNA in bridges B5 and B8.

In terms of biological role, binds to 23S rRNA. Forms part of two intersubunit bridges in the 70S ribosome. This is Large ribosomal subunit protein uL14 from Chromobacterium violaceum (strain ATCC 12472 / DSM 30191 / JCM 1249 / CCUG 213 / NBRC 12614 / NCIMB 9131 / NCTC 9757 / MK).